Here is a 72-residue protein sequence, read N- to C-terminus: Heat-stable enterotoxin C (72 aa).

An N-terminal signal peptide occupies residues 1–19 (MKKIVFVLTLMLFSFGTLG). 3 disulfide bridges follow: cysteine 60/cysteine 65, cysteine 61/cysteine 69, and cysteine 64/cysteine 72.

Belongs to the heat-stable enterotoxin family.

It is found in the secreted. Functionally, toxin which activates the particulate form of guanylate cyclase and increases cyclic GMP levels within the host intestinal epithelial cells. Highly toxic. The polypeptide is Heat-stable enterotoxin C (ystC) (Yersinia enterocolitica).